The primary structure comprises 477 residues: Asparaginyl-tRNA synthetase (477 aa).

The N-terminal 14 residues, 1–14 (MLGVRCLLRSVRFC), are a transit peptide targeting the mitochondrion. K353 carries the post-translational modification N6-acetyllysine.

Belongs to the class-II aminoacyl-tRNA synthetase family. Homodimer.

The protein resides in the mitochondrion matrix. The protein localises to the mitochondrion. It catalyses the reaction tRNA(Asn) + L-asparagine + ATP = L-asparaginyl-tRNA(Asn) + AMP + diphosphate + H(+). Its function is as follows. Mitochondrial aminoacyl-tRNA synthetase that catalyzes the specific attachment of the asparagine amino acid (aa) to the homologous transfer RNA (tRNA), further participating in protein synthesis. The reaction occurs in a two steps: asparagine is first activated by ATP to form Asn-AMP and then transferred to the acceptor end of tRNA(Asn). This is Asparaginyl-tRNA synthetase from Homo sapiens (Human).